Here is a 76-residue protein sequence, read N- to C-terminus: Cytochrome c oxidase subunit 6C (76 aa).

Topologically, residues 4–22 (GALLPKPQMRGLLAKRLRV) are mitochondrial matrix. The helical transmembrane segment at 23–44 (HIAGAFIVALGVAAAYKFGVAE) threads the bilayer. Over 45-76 (PRKKAYAEFYRNYDSMKDFEEMRKAGIFQSAK) the chain is Mitochondrial intermembrane.

This sequence belongs to the cytochrome c oxidase subunit 6c family. In terms of assembly, component of the cytochrome c oxidase (complex IV, CIV), a multisubunit enzyme composed of 14 subunits. The complex is composed of a catalytic core of 3 subunits MT-CO1, MT-CO2 and MT-CO3, encoded in the mitochondrial DNA, and 11 supernumerary subunits COX4I, COX5A, COX5B, COX6A, COX6B, COX6C, COX7A, COX7B, COX7C, COX8 and NDUFA4, which are encoded in the nuclear genome. The complex exists as a monomer or a dimer and forms supercomplexes (SCs) in the inner mitochondrial membrane with NADH-ubiquinone oxidoreductase (complex I, CI) and ubiquinol-cytochrome c oxidoreductase (cytochrome b-c1 complex, complex III, CIII), resulting in different assemblies (supercomplex SCI(1)III(2)IV(1) and megacomplex MCI(2)III(2)IV(2)). Post-translationally, acetylation of Lys-61 is observed in liver mitochondria from fasted mice but not from fed mice.

It is found in the mitochondrion inner membrane. It functions in the pathway energy metabolism; oxidative phosphorylation. Component of the cytochrome c oxidase, the last enzyme in the mitochondrial electron transport chain which drives oxidative phosphorylation. The respiratory chain contains 3 multisubunit complexes succinate dehydrogenase (complex II, CII), ubiquinol-cytochrome c oxidoreductase (cytochrome b-c1 complex, complex III, CIII) and cytochrome c oxidase (complex IV, CIV), that cooperate to transfer electrons derived from NADH and succinate to molecular oxygen, creating an electrochemical gradient over the inner membrane that drives transmembrane transport and the ATP synthase. Cytochrome c oxidase is the component of the respiratory chain that catalyzes the reduction of oxygen to water. Electrons originating from reduced cytochrome c in the intermembrane space (IMS) are transferred via the dinuclear copper A center (CU(A)) of subunit 2 and heme A of subunit 1 to the active site in subunit 1, a binuclear center (BNC) formed by heme A3 and copper B (CU(B)). The BNC reduces molecular oxygen to 2 water molecules using 4 electrons from cytochrome c in the IMS and 4 protons from the mitochondrial matrix. This is Cytochrome c oxidase subunit 6C (Cox6c) from Mus musculus (Mouse).